We begin with the raw amino-acid sequence, 283 residues long: Bifunctional protein FolD (283 aa).

NADP(+) is bound by residues 164 to 166 (GRS) and S189.

It belongs to the tetrahydrofolate dehydrogenase/cyclohydrolase family. As to quaternary structure, homodimer.

The catalysed reaction is (6R)-5,10-methylene-5,6,7,8-tetrahydrofolate + NADP(+) = (6R)-5,10-methenyltetrahydrofolate + NADPH. The enzyme catalyses (6R)-5,10-methenyltetrahydrofolate + H2O = (6R)-10-formyltetrahydrofolate + H(+). The protein operates within one-carbon metabolism; tetrahydrofolate interconversion. Its function is as follows. Catalyzes the oxidation of 5,10-methylenetetrahydrofolate to 5,10-methenyltetrahydrofolate and then the hydrolysis of 5,10-methenyltetrahydrofolate to 10-formyltetrahydrofolate. The protein is Bifunctional protein FolD of Lactobacillus acidophilus (strain ATCC 700396 / NCK56 / N2 / NCFM).